The primary structure comprises 629 residues: tRNA uridine 5-carboxymethylaminomethyl modification enzyme MnmG (629 aa).

FAD is bound by residues Gly14 to Gly19, Val126, and Ser181. Residue Gly273–Phe287 participates in NAD(+) binding. Residue Gln370 coordinates FAD.

It belongs to the MnmG family. In terms of assembly, homodimer. Heterotetramer of two MnmE and two MnmG subunits. FAD is required as a cofactor.

Its subcellular location is the cytoplasm. Its function is as follows. NAD-binding protein involved in the addition of a carboxymethylaminomethyl (cmnm) group at the wobble position (U34) of certain tRNAs, forming tRNA-cmnm(5)s(2)U34. This Bacillus cereus (strain ZK / E33L) protein is tRNA uridine 5-carboxymethylaminomethyl modification enzyme MnmG.